The primary structure comprises 153 residues: Transcriptional repressor NrdR (153 aa).

A zinc finger lies at 3 to 34; the sequence is CPYCGHPDTRVVDSRPSDEGMAIRRRRECPSC. The ATP-cone domain maps to 49 to 136; the sequence is LMVVKRDGRK…VYREFDSVER (88 aa).

The protein belongs to the NrdR family. Zn(2+) serves as cofactor.

In terms of biological role, negatively regulates transcription of bacterial ribonucleotide reductase nrd genes and operons by binding to NrdR-boxes. The chain is Transcriptional repressor NrdR from Thermus thermophilus (strain ATCC BAA-163 / DSM 7039 / HB27).